The primary structure comprises 500 residues: Raftlin-2 (500 aa).

Gly2 is lipidated: N-myristoyl glycine. Cys3 is lipidated: S-palmitoyl cysteine. The tract at residues 203 to 236 (GHLSESGVEEEPQHESGQHQTERNSSPSYANPKR) is disordered. Basic and acidic residues predominate over residues 213–224 (EPQHESGQHQTE). The residue at position 404 (Ser404) is a Phosphoserine. The tract at residues 406-500 (AQTPERKGSR…EEGVTQVTCM (95 aa)) is disordered. Thr408 is modified (phosphothreonine). The segment covering 409–424 (PERKGSRLLKGEDRNK) has biased composition (basic and acidic residues). Over residues 426–438 (SSRSLGLDTNASQ) the composition is skewed to polar residues. At Ser429 the chain carries Phosphoserine. Over residues 467–478 (SDSFSGFSSSDS) the composition is skewed to low complexity.

It belongs to the raftlin family. As to expression, expressed in B-cells, heart, brain, spleen, large intestine and lung. Expressed in dendritic cells and macrophages.

The protein resides in the cell membrane. Functionally, upon bacterial lipopolysaccharide stimulation, mediates clathrin-dependent internalization of TLR4 in dendritic cells, resulting in activation of TICAM1-mediated signaling and subsequent IFNB1 production. May regulate B-cell antigen receptor-mediated signaling. The sequence is that of Raftlin-2 (Rftn2) from Mus musculus (Mouse).